A 231-amino-acid polypeptide reads, in one-letter code: Putative cobalt transport protein CbiM 1 (231 aa).

Helical transmembrane passes span 8-28 (LPLQ…AYGI), 41-61 (TLPL…LKMP), 74-94 (GLGA…IVLV), 97-117 (ALFL…SMGI), 138-158 (IVNV…ITSI), and 175-195 (FITF…IEGI).

Belongs to the CbiM family. In terms of assembly, forms an energy-coupling factor (ECF) transporter complex composed of an ATP-binding protein (A component, CbiO), a transmembrane protein (T component, CbiQ) and 2 possible substrate-capture proteins (S components, CbiM and CbiN) of unknown stoichimetry.

Its subcellular location is the cell membrane. Its pathway is cofactor biosynthesis; adenosylcobalamin biosynthesis. Functionally, part of the energy-coupling factor (ECF) transporter complex CbiMNOQ involved in cobalt import. This is Putative cobalt transport protein CbiM 1 from Methanosphaerula palustris (strain ATCC BAA-1556 / DSM 19958 / E1-9c).